The primary structure comprises 335 residues: F420-dependent glucose-6-phosphate dehydrogenase 1 (335 aa).

Asp38 is a binding site for coenzyme F420-(gamma-Glu)n. Catalysis depends on His39, which acts as the Proton donor. Coenzyme F420-(gamma-Glu)n-binding positions include Thr75 and 106 to 107 (TG). Catalysis depends on Glu108, which acts as the Proton acceptor. Coenzyme F420-(gamma-Glu)n contacts are provided by residues Asn111, 176–177 (GG), and 179–180 (VV). Substrate contacts are provided by Thr194, Lys197, Lys258, and Arg282.

Belongs to the F420-dependent glucose-6-phosphate dehydrogenase family. In terms of assembly, homodimer.

The enzyme catalyses oxidized coenzyme F420-(gamma-L-Glu)(n) + D-glucose 6-phosphate + H(+) = 6-phospho-D-glucono-1,5-lactone + reduced coenzyme F420-(gamma-L-Glu)(n). In terms of biological role, catalyzes the coenzyme F420-dependent oxidation of glucose 6-phosphate (G6P) to 6-phosphogluconolactone. This is F420-dependent glucose-6-phosphate dehydrogenase 1 from Rhodococcus jostii (strain RHA1).